Consider the following 250-residue polypeptide: 5'-nucleotidase SurE (250 aa).

The a divalent metal cation site is built by aspartate 8, aspartate 9, serine 40, and asparagine 94.

The protein belongs to the SurE nucleotidase family. Requires a divalent metal cation as cofactor.

The protein resides in the cytoplasm. It catalyses the reaction a ribonucleoside 5'-phosphate + H2O = a ribonucleoside + phosphate. Its function is as follows. Nucleotidase that shows phosphatase activity on nucleoside 5'-monophosphates. This Wolbachia pipientis wMel protein is 5'-nucleotidase SurE.